The chain runs to 884 residues: Probable leucine-rich repeat receptor-like protein kinase At2g28990 (884 aa).

Positions 1–19 (MKIHLLLAMIGTFVVIIGA) are cleaved as a signal peptide. Residues 20 to 508 (QDQEGFISLD…TEKKNKFLLP (489 aa)) are Extracellular-facing. N-linked (GlcNAc...) asparagine glycans are attached at residues N70, N177, N217, N231, N251, N284, N298, N334, N418, N427, N438, N459, and N464. 3 LRR repeats span residues 404–427 (SPTI…ILQN), 428–451 (FTQL…FLAN), and 452–476 (MKTL…LLDK). Residues 509 to 529 (VIASAASLVIVVVVVALFFVF) traverse the membrane as a helical segment. Over 530 to 884 (RKKKASPSNL…IYNEVIPQAR (355 aa)) the chain is Cytoplasmic. The tract at residues 535–559 (SPSNLHAPPSMPVSNPGHNSQSESS) is disordered. The segment covering 546–559 (PVSNPGHNSQSESS) has biased composition (polar residues). T568 carries the post-translational modification Phosphothreonine. Residues 577–850 (NNFDKALGEG…RVVNELKECL (274 aa)) form the Protein kinase domain. ATP is bound by residues 583–591 (LGEGGFGVV) and K605. The residue at position 650 (Y650) is a Phosphotyrosine. The active-site Proton acceptor is D702. Residue S736 is modified to Phosphoserine. Phosphothreonine is present on residues T737 and T742. Phosphotyrosine is present on Y750.

The protein belongs to the protein kinase superfamily. Ser/Thr protein kinase family. In terms of assembly, binds to the ammonium transporter AMT1-1.

It localises to the membrane. It carries out the reaction L-seryl-[protein] + ATP = O-phospho-L-seryl-[protein] + ADP + H(+). The catalysed reaction is L-threonyl-[protein] + ATP = O-phospho-L-threonyl-[protein] + ADP + H(+). The sequence is that of Probable leucine-rich repeat receptor-like protein kinase At2g28990 from Arabidopsis thaliana (Mouse-ear cress).